Here is a 423-residue protein sequence, read N- to C-terminus: Maltooligosaccharide ABC transporter solute-binding lipoprotein (423 aa).

The first 24 residues, 1-24 (MSSKFMKSAAVLGTATLASLLLVA), serve as a signal peptide directing secretion. Residue Cys-25 is the site of N-palmitoyl cysteine attachment. The S-diacylglycerol cysteine moiety is linked to residue Cys-25. Substrate is bound by residues Tyr-52, Asp-77, Asp-83, 103 to 104 (DR), Glu-148, Asp-193, Asn-196, 251 to 254 (EGAG), Trp-274, and Lys-307.

This sequence belongs to the bacterial solute-binding protein 1 family.

The protein localises to the cell membrane. Part of an ABC transporter complex involved in the uptake of maltodextrins. Binds glycogen-derived linear maltooligosaccharides increasing in size from maltotriose to maltooctaose with the highest affinity for maltotriose. Has a very weak affinity for maltose. Has also a very low affinity for maltotetraitol, indicating that the binding is selective for maltooligosaccharides with an intact reducing end. In Streptococcus pneumoniae serotype 4 (strain ATCC BAA-334 / TIGR4), this protein is Maltooligosaccharide ABC transporter solute-binding lipoprotein.